The chain runs to 101 residues: Protein snet-1 (101 aa).

The signal sequence occupies residues 1–20 (MARFTPLLMILLALVPLYYS).

In terms of processing, may be degraded by the nep-2 peptidase. In terms of tissue distribution, expressed in coelomocytes, the ASK sensory neurons and interneurons AIB, AIM and PVQ.

It localises to the secreted. The protein localises to the perikaryon. In terms of biological role, negatively regulates chemotaxis and olfactory plasticity which is the change from positive chemotaxis to dispersal after prolonged exposure to an odorant. May be down-regulated in response to pheromone exposure, resulting in promotion of olfactory plasticity. This chain is Protein snet-1, found in Caenorhabditis elegans.